The primary structure comprises 494 residues: Aspartyl/glutamyl-tRNA(Asn/Gln) amidotransferase subunit B (494 aa).

It belongs to the GatB/GatE family. GatB subfamily. As to quaternary structure, heterotrimer of A, B and C subunits.

It catalyses the reaction L-glutamyl-tRNA(Gln) + L-glutamine + ATP + H2O = L-glutaminyl-tRNA(Gln) + L-glutamate + ADP + phosphate + H(+). The enzyme catalyses L-aspartyl-tRNA(Asn) + L-glutamine + ATP + H2O = L-asparaginyl-tRNA(Asn) + L-glutamate + ADP + phosphate + 2 H(+). Its function is as follows. Allows the formation of correctly charged Asn-tRNA(Asn) or Gln-tRNA(Gln) through the transamidation of misacylated Asp-tRNA(Asn) or Glu-tRNA(Gln) in organisms which lack either or both of asparaginyl-tRNA or glutaminyl-tRNA synthetases. The reaction takes place in the presence of glutamine and ATP through an activated phospho-Asp-tRNA(Asn) or phospho-Glu-tRNA(Gln). The chain is Aspartyl/glutamyl-tRNA(Asn/Gln) amidotransferase subunit B from Rhodopseudomonas palustris (strain HaA2).